A 117-amino-acid chain; its full sequence is Large ribosomal subunit protein uL18 (117 aa).

Belongs to the universal ribosomal protein uL18 family. Part of the 50S ribosomal subunit; part of the 5S rRNA/L5/L18/L25 subcomplex. Contacts the 5S and 23S rRNAs.

This is one of the proteins that bind and probably mediate the attachment of the 5S RNA into the large ribosomal subunit, where it forms part of the central protuberance. The sequence is that of Large ribosomal subunit protein uL18 from Photorhabdus laumondii subsp. laumondii (strain DSM 15139 / CIP 105565 / TT01) (Photorhabdus luminescens subsp. laumondii).